Consider the following 202-residue polypeptide: Nascent polypeptide-associated complex subunit alpha (202 aa).

Basic and acidic residues predominate over residues 1–19 (MADPRVEEIVEEETPKQTV). A disordered region spans residues 1-41 (MADPRVEEIVEEETPKQTVEDAGSDSESEAGEANIPAGAAV). The region spanning 45 to 110 (SRNEKKARKA…AKIEDLNSQA (66 aa)) is the NAC-A/B domain. Over residues 117-127 (QLAAAEAAAGE) the composition is skewed to low complexity. The tract at residues 117–165 (QLAAAEAAAGEHAGHDHEHDLGTKVPEAETKKEEEEDDGEPVDESGLEA) is disordered. The segment covering 128 to 149 (HAGHDHEHDLGTKVPEAETKKE) has biased composition (basic and acidic residues). Positions 150–162 (EEEDDGEPVDESG) are enriched in acidic residues. The UBA domain occupies 163–202 (LEAKDIELVMAQANVSRKKAVKALRENDNDIVNSIMALSI).

The protein belongs to the NAC-alpha family. In terms of assembly, part of the nascent polypeptide-associated complex (NAC), consisting of egd2 and egd1. NAC associates with ribosomes via egd1.

Its subcellular location is the cytoplasm. It is found in the nucleus. Component of the nascent polypeptide-associated complex (NAC), a dynamic component of the ribosomal exit tunnel, protecting the emerging polypeptides from interaction with other cytoplasmic proteins to ensure appropriate nascent protein targeting. The NAC complex also promotes mitochondrial protein import by enhancing productive ribosome interactions with the outer mitochondrial membrane and blocks the inappropriate interaction of ribosomes translating non-secretory nascent polypeptides with translocation sites in the membrane of the endoplasmic reticulum. Egd2 may also be involved in transcription regulation. In Aspergillus oryzae (strain ATCC 42149 / RIB 40) (Yellow koji mold), this protein is Nascent polypeptide-associated complex subunit alpha (egd2).